Reading from the N-terminus, the 169-residue chain is Small proline-rich protein 3 (169 aa).

Over residues 1 to 24 the composition is skewed to low complexity; that stretch reads MSSYQQKQTFTPPPQLQQQQVKQP. The disordered stretch occupies residues 1–57; the sequence is MSSYQQKQTFTPPPQLQQQQVKQPSQPPPQEIFVPTTKEPCHSKVPQPGNTKIPEPG. Serine 2 is modified (N-acetylserine). 14 repeat units span residues 43-50, 51-58, 59-66, 67-74, 75-82, 83-90, 91-98, 99-106, 107-114, 115-122, 123-130, 131-138, 139-146, and 147-154. The segment at 43–154 is 14 X 8 AA approximate tandem repeats; sequence SKVPQPGNTK…GYTKLPEPCP (112 aa). A disordered region spans residues 150-169; that stretch reads PEPCPSTVTPGPAQQKTKQK. A compositionally biased stretch (polar residues) spans 155-169; it reads STVTPGPAQQKTKQK.

It is found in the cytoplasm. Functionally, cross-linked envelope protein of keratinocytes. The polypeptide is Small proline-rich protein 3 (SPRR3) (Homo sapiens (Human)).